A 179-amino-acid polypeptide reads, in one-letter code: ECF RNA polymerase sigma factor SigF (179 aa).

Positions 33–93 (RLRAYFMRRM…KLIDHWRRRK (61 aa)) are sigma-70 factor domain-2. Positions 51–64 (DLVQETLLAVHLKR) match the Polymerase core binding motif. The sigma-70 factor domain-4 stretch occupies residues 123 to 170 (ALASLPQRQRMLVSDVKLTGLSLAEAGARAGISEGAAKVALHRALKAL). The H-T-H motif DNA-binding region spans 145-164 (LAEAGARAGISEGAAKVALH).

The protein belongs to the sigma-70 factor family. ECF subfamily.

The protein localises to the cytoplasm. In terms of biological role, sigma factors are initiation factors that promote the attachment of RNA polymerase to specific initiation sites and are then released. Extracytoplasmic function (ECF) sigma factors are held in an inactive form by a cognate anti-sigma factor (NrsF in this case) until they are released. Up-regulates expression of 4 operons (sigF-nrsF, CCNA_02834, CCNA_03001 to CCNA_02999 and CCNA_03363 to CCNA_03366) in response to potassium dichromate (K(2)Cr(2)O(7)) or cadmium chloride (CdCl(2)). Overexpression of sigF leads to higher expression of its regulon. This chain is ECF RNA polymerase sigma factor SigF, found in Caulobacter vibrioides (strain NA1000 / CB15N) (Caulobacter crescentus).